Consider the following 270-residue polypeptide: Glucosamine-6-phosphate deaminase (270 aa).

The Proton acceptor; for enolization step role is filled by D72. D141 (for ring-opening step) is an active-site residue. H143 acts as the Proton acceptor; for ring-opening step in catalysis. E148 acts as the For ring-opening step in catalysis.

Belongs to the glucosamine/galactosamine-6-phosphate isomerase family. NagB subfamily. Homohexamer.

The catalysed reaction is alpha-D-glucosamine 6-phosphate + H2O = beta-D-fructose 6-phosphate + NH4(+). It functions in the pathway amino-sugar metabolism; N-acetylneuraminate degradation; D-fructose 6-phosphate from N-acetylneuraminate: step 5/5. Allosterically activated by N-acetylglucosamine 6-phosphate (GlcNAc6P). Catalyzes the reversible isomerization-deamination of glucosamine 6-phosphate (GlcN6P) to form fructose 6-phosphate (Fru6P) and ammonium ion. This chain is Glucosamine-6-phosphate deaminase, found in Photorhabdus laumondii subsp. laumondii (strain DSM 15139 / CIP 105565 / TT01) (Photorhabdus luminescens subsp. laumondii).